The primary structure comprises 547 residues: Inositol-tetrakisphosphate 1-kinase 6 (547 aa).

Lys263 is a 1D-myo-inositol 1,3,4-trisphosphate binding site. Residues Arg317 and Lys370 each coordinate ATP. Residues 327–539 (LEGLSAEGRP…FWDAIKQSYE (213 aa)) form the ATP-grasp domain. His381 and Lys415 together coordinate 1D-myo-inositol 1,3,4-trisphosphate. ATP contacts are provided by residues 404–415 (QEYIDHGSKIFK), Ser430, and Ser450. 3 residues coordinate Mg(2+): Asp497, Asp511, and Asn513. 1D-myo-inositol 1,3,4-trisphosphate-binding residues include Asn513 and Ser517.

Belongs to the ITPK1 family. Monomer. It depends on Mg(2+) as a cofactor.

The catalysed reaction is 1D-myo-inositol 3,4,5,6-tetrakisphosphate + ATP = 1D-myo-inositol 1,3,4,5,6-pentakisphosphate + ADP + H(+). It catalyses the reaction 1D-myo-inositol 1,3,4-trisphosphate + ATP = 1D-myo-inositol 1,3,4,5-tetrakisphosphate + ADP + H(+). It carries out the reaction 1D-myo-inositol 1,3,4-trisphosphate + ATP = 1D-myo-inositol 1,3,4,6-tetrakisphosphate + ADP + H(+). Functionally, kinase that can phosphorylate various inositol polyphosphate such as Ins(3,4,5,6)P4 or Ins(1,3,4)P3 and participates in phytic acid biosynthesis in developing seeds. Phytic acid is the primary storage form of phosphorus in cereal grains and other plant seeds. This is Inositol-tetrakisphosphate 1-kinase 6 from Oryza sativa subsp. indica (Rice).